The sequence spans 445 residues: Hydroxycinnamoyl-CoA:5-hydroxyanthranilate N-hydroxycinnamoyltransferase HHT4 (445 aa).

It belongs to the plant acyltransferase family.

It catalyses the reaction 5-hydroxyanthranilate + (E)-4-coumaroyl-CoA = avenanthramide A + CoA. The enzyme catalyses 5-hydroxyanthranilate + (E)-caffeoyl-CoA = avenanthramide C + CoA. Involved in the biosynthesis of avenanthramide phytoalexins, which are phenolic alkaloids found mainly in oats. Catalyzes the N-acylation of 5-hydroxyanthranilate with 4-coumaroyl-CoA or caffeoyl-CoA as acyl donors, forming avenanthramide A and avenanthramide C, respectively. Does not accept feruloyl-CoA as a substrate. The protein is Hydroxycinnamoyl-CoA:5-hydroxyanthranilate N-hydroxycinnamoyltransferase HHT4 of Avena sativa (Oat).